The chain runs to 360 residues: Aspartate beta-hydroxylase domain-containing protein 1 (360 aa).

The Cytoplasmic portion of the chain corresponds to 1–45 (MWKGGNQEAVIEGSGGELGVPGSWGLQDAACHLARASLPIMFPWP). A helical transmembrane segment spans residues 46 to 68 (LPLGSSALTMLLGALTSLFLWYC). Over 69 to 360 (YRLGSQDMQA…ALDFVFAPDP (292 aa)) the chain is Lumenal.

It belongs to the aspartyl/asparaginyl beta-hydroxylase family.

It is found in the membrane. The sequence is that of Aspartate beta-hydroxylase domain-containing protein 1 (Asphd1) from Mus musculus (Mouse).